The primary structure comprises 145 residues: D-aminoacyl-tRNA deacylase (145 aa).

A Gly-cisPro motif, important for rejection of L-amino acids motif is present at residues 137-138 (GP).

This sequence belongs to the DTD family. In terms of assembly, homodimer.

It localises to the cytoplasm. The enzyme catalyses glycyl-tRNA(Ala) + H2O = tRNA(Ala) + glycine + H(+). The catalysed reaction is a D-aminoacyl-tRNA + H2O = a tRNA + a D-alpha-amino acid + H(+). In terms of biological role, an aminoacyl-tRNA editing enzyme that deacylates mischarged D-aminoacyl-tRNAs. Also deacylates mischarged glycyl-tRNA(Ala), protecting cells against glycine mischarging by AlaRS. Acts via tRNA-based rather than protein-based catalysis; rejects L-amino acids rather than detecting D-amino acids in the active site. By recycling D-aminoacyl-tRNA to D-amino acids and free tRNA molecules, this enzyme counteracts the toxicity associated with the formation of D-aminoacyl-tRNA entities in vivo and helps enforce protein L-homochirality. This is D-aminoacyl-tRNA deacylase from Exiguobacterium sibiricum (strain DSM 17290 / CCUG 55495 / CIP 109462 / JCM 13490 / 255-15).